The chain runs to 138 residues: ATP synthase epsilon chain (138 aa).

Belongs to the ATPase epsilon chain family. In terms of assembly, F-type ATPases have 2 components, CF(1) - the catalytic core - and CF(0) - the membrane proton channel. CF(1) has five subunits: alpha(3), beta(3), gamma(1), delta(1), epsilon(1). CF(0) has three main subunits: a, b and c.

The protein resides in the cell inner membrane. Produces ATP from ADP in the presence of a proton gradient across the membrane. This Acidovorax ebreus (strain TPSY) (Diaphorobacter sp. (strain TPSY)) protein is ATP synthase epsilon chain.